The primary structure comprises 757 residues: Ecdysone receptor (757 aa).

A modulating region spans residues 1-300; it reads MMKRRWSNNG…GPAPRLQEEL (300 aa). Disordered regions lie at residues 126-192 and 235-289; these read NSVG…GGGG and LNHH…KKIK. Residues 128–138 show a composition bias toward gly residues; it reads VGGGGGGGGVP. Positions 167–183 are enriched in low complexity; that stretch reads NSNSNHSNSSSHHTNGH. 2 NR C4-type zinc fingers span residues 301–321 and 337–361; these read CLVC…CEGC and CKFG…LKKC. Positions 301–373 form a DNA-binding region, nuclear receptor; that stretch reads CLVCGDRASG…VGMRPECVVP (73 aa). Positions 442–677 constitute an NR LBD domain; that stretch reads NQLAVIYKLI…FLEEIWDVHA (236 aa). The span at 717-734 shows a compositional bias: low complexity; sequence TSMATSSSSSLSPSAAST. The segment at 717-739 is disordered; sequence TSMATSSSSSLSPSAASTPNGGA.

Belongs to the nuclear hormone receptor family. NR1 subfamily.

The protein resides in the nucleus. Functionally, receptor for ecdysone. Binds to ecdysone response elements (ECRES). The chain is Ecdysone receptor (EcR) from Lucilia cuprina (Green bottle fly).